Reading from the N-terminus, the 211-residue chain is Thymidylate kinase (211 aa).

An ATP-binding site is contributed by 11 to 18 (GPDGAGKT).

It belongs to the thymidylate kinase family.

It carries out the reaction dTMP + ATP = dTDP + ADP. Phosphorylation of dTMP to form dTDP in both de novo and salvage pathways of dTTP synthesis. The sequence is that of Thymidylate kinase from Streptococcus equi subsp. equi (strain 4047).